A 530-amino-acid chain; its full sequence is Serendipity locus protein alpha (530 aa).

In terms of tissue distribution, transient expression in blastoderm from nuclear cycle 11 to the onset of gastrulation.

The protein localises to the cytoplasm. The protein resides in the cell membrane. Its function is as follows. Required for the cellularization of the syncytial blastoderm embryo. Involved in the localization of the actin filaments just prior to and during plasma membrane invagination. Sry-alpha together with nullo and bnk may provide auxiliary functions, by acting both to stabilize a large and dynamic microfilament structure and regulate its functions. The protein is Serendipity locus protein alpha (Sry-alpha) of Drosophila melanogaster (Fruit fly).